Here is a 335-residue protein sequence, read N- to C-terminus: SLAM family member 7 (335 aa).

Positions Met-1–Ala-22 are cleaved as a signal peptide. The region spanning Ser-23 to Val-124 is the Ig-like V-type domain. The Extracellular portion of the chain corresponds to Ser-23 to Met-226. 6 N-linked (GlcNAc...) asparagine glycosylation sites follow: Asn-98, Asn-142, Asn-148, Asn-172, Asn-176, and Asn-204. In terms of domain architecture, Ig-like C2-type spans Pro-131–Ser-206. 2 disulfide bridges follow: Cys-145-Cys-215 and Cys-151-Cys-195. A helical membrane pass occupies residues Val-227 to Leu-247. The Cytoplasmic segment spans residues Trp-248 to Ile-335. An interaction with FYN when phosphorylated at Tyr-284 region spans residues Ser-278–Lys-296. The ITSM signature appears at Thr-302–Val-307.

As to quaternary structure, isoform 1 binds to SH2D1A when its cytoplasmic tail is phosphorylated in the presence of FYN (in vitro); low affinity binding, the physiological relevance of the interaction is questioned. Interacts with SH2D1B; in NK cells. Interacts (via ITSM phosphorylated on Tyr-302) with SH2D1B, PTPN6/SHP-1, PTPN11/SHP-2, INPP5D/SHIP1, CSK and FYN. In terms of tissue distribution, expressed in spleen, lymph node, peripheral blood leukocytes, bone marrow, small intestine, stomach, appendix, lung and trachea. Expression was detected in NK cells, activated B-cells, NK-cell line but not in promyelocytic, B-, or T-cell lines. Expressed in monocytes. Isoform 3 is expressed at much lower level than isoform 1.

Its subcellular location is the membrane. In terms of biological role, self-ligand receptor of the signaling lymphocytic activation molecule (SLAM) family. SLAM receptors triggered by homo- or heterotypic cell-cell interactions are modulating the activation and differentiation of a wide variety of immune cells and thus are involved in the regulation and interconnection of both innate and adaptive immune response. Activities are controlled by presence or absence of small cytoplasmic adapter proteins, SH2D1A/SAP and/or SH2D1B/EAT-2. Isoform 1 mediates NK cell activation through a SH2D1A-independent extracellular signal-regulated ERK-mediated pathway. Positively regulates NK cell functions by a mechanism dependent on phosphorylated SH2D1B. Downstream signaling implicates PLCG1, PLCG2 and PI3K. In addition to heterotypic NK cells-target cells interactions also homotypic interactions between NK cells may contribute to activation. However, in the absence of SH2D1B, inhibits NK cell function. Also acts inhibitory in T-cells. May play a role in lymphocyte adhesion. In LPS-activated monocytes negatively regulates production of pro-inflammatory cytokines. Functionally, isoform 3 does not mediate any NK cell activation. This is SLAM family member 7 (SLAMF7) from Homo sapiens (Human).